Here is a 408-residue protein sequence, read N- to C-terminus: Histidine--tRNA ligase (408 aa).

It belongs to the class-II aminoacyl-tRNA synthetase family. In terms of assembly, homodimer.

The protein localises to the cytoplasm. It carries out the reaction tRNA(His) + L-histidine + ATP = L-histidyl-tRNA(His) + AMP + diphosphate + H(+). In Campylobacter lari (strain RM2100 / D67 / ATCC BAA-1060), this protein is Histidine--tRNA ligase.